We begin with the raw amino-acid sequence, 271 residues long: 4-hydroxy-tetrahydrodipicolinate reductase (271 aa).

Residues 10–15, Glu36, 100–102, and 124–127 contribute to the NAD(+) site; these read GAGGRM, GTT, and SGNM. Residue His157 is the Proton donor/acceptor of the active site. A (S)-2,3,4,5-tetrahydrodipicolinate-binding site is contributed by His158. Lys161 acts as the Proton donor in catalysis. Residue 167–168 coordinates (S)-2,3,4,5-tetrahydrodipicolinate; the sequence is GT.

This sequence belongs to the DapB family.

The protein resides in the cytoplasm. It catalyses the reaction (S)-2,3,4,5-tetrahydrodipicolinate + NAD(+) + H2O = (2S,4S)-4-hydroxy-2,3,4,5-tetrahydrodipicolinate + NADH + H(+). The enzyme catalyses (S)-2,3,4,5-tetrahydrodipicolinate + NADP(+) + H2O = (2S,4S)-4-hydroxy-2,3,4,5-tetrahydrodipicolinate + NADPH + H(+). It participates in amino-acid biosynthesis; L-lysine biosynthesis via DAP pathway; (S)-tetrahydrodipicolinate from L-aspartate: step 4/4. Catalyzes the conversion of 4-hydroxy-tetrahydrodipicolinate (HTPA) to tetrahydrodipicolinate. This chain is 4-hydroxy-tetrahydrodipicolinate reductase, found in Bradyrhizobium diazoefficiens (strain JCM 10833 / BCRC 13528 / IAM 13628 / NBRC 14792 / USDA 110).